A 761-amino-acid chain; its full sequence is uncharacterized protein (761 aa).

The residue at position 1 (Met1) is an N-acetylmethionine. 3 disordered regions span residues Met1–Ser82, Ser229–Ala320, and Phe590–Gln640. Residues Asn13–Leu27 are compositionally biased toward polar residues. Residues Pro28 to Thr45 are compositionally biased toward low complexity. 4 stretches are compositionally biased toward polar residues: residues Thr244–Glu259, Asn266–His276, Phe590–Asp604, and Ser627–Gln640.

Post-translationally, phosphorylated by CDC28.

This is an uncharacterized protein from Saccharomyces cerevisiae (strain ATCC 204508 / S288c) (Baker's yeast).